The chain runs to 395 residues: GPI-anchor transamidase (395 aa).

The signal sequence occupies residues 1 to 27; that stretch reads MAAPCFLTLRVATLAALALLSLGSSAA. Residues 28 to 368 are Lumenal-facing; it reads GHIEDQAEQF…PKPRDWHPPG (341 aa). Ca(2+) contacts are provided by aspartate 79, isoleucine 82, glutamate 118, and aspartate 120. Histidine 164 (proton donor) is an active-site residue. Catalysis depends on cysteine 206, which acts as the Nucleophile; acyl-thioester intermediate. Residues cysteine 206, serine 232, and serine 234 each coordinate a protein. Residues 231-236 form an autoinhibitory loop region; the sequence is DSLSHQ. An intrachain disulfide couples cysteine 275 to cysteine 280. The helical transmembrane segment at 369–385 threads the bilayer; the sequence is GFILGLWALIIMVFFKT. The Cytoplasmic portion of the chain corresponds to 386–395; that stretch reads YGIKHMKFIF.

Belongs to the peptidase C13 family. As to quaternary structure, heteropentamer. Part of the GPI-anchor transamidase complex, consisting of PIGK, PIGT, PIGS, PIGU and GAA1. Interacts with GPAA1. Interacts with PIGT; this interaction, via a disulfide link, stabilizes the expression of GAA1 and PIGK and links them to PIGS. The disulfide bond between PIGK/GPI8 and PIGT is important for normal enzyme activity.

It is found in the endoplasmic reticulum membrane. It participates in glycolipid biosynthesis; glycosylphosphatidylinositol-anchor biosynthesis. In the absence of proproteins substrates, exists in an inactive state with a disrupted catalytic site by an autoinhibitory loop. The binding of proprotein substrates, particularly the CSP region, to GPI-T triggers concerted conformational changes that alleviate the inhibition by the autoinhibitory loop. Meanwhile, proprotein residues near the omega- site induce the formation of a catalytic cleft for catalysis, following which the products are released and GPI-T reverts to the inactive state. Its function is as follows. Catalytic subunit of the glycosylphosphatidylinositol-anchor (GPI-anchor) transamidase (GPI-T) complex that catalyzes the formation of the linkage between a proprotein and a GPI-anchor and participates in GPI anchored protein biosynthesis. Recognizes diverse proproteins at a C-terminal signal peptide (CSP) region that lacks consensus sequence and replaces it with a GPI-anchor via a transamidation reaction. Transamidation catalysis reaction follows a two-phase mechanism. In the acyl-enzyme phase, the carbonyl group of the proproteins's omega-site undergoes a nucleophilic attack forming an enzyme-substrate thioester bond. Followed by a general acid catalysis that allows CSP releasing, regenerating the carbonyl, and forming the acyl-enzyme intermediate. In the GPI-anchor attachment phase, the amino group of the GPI-anchor's ethanolamine phosphate, the one on third mannose (EtNP3), mediates a nucleophilic attack on the carbonyl of the acyl-enzyme intermediate, replacing the CSP, allowing GPI-anchor attachment to the omega-residue, therefore forming the product and freeing the enzyme. This Mus musculus (Mouse) protein is GPI-anchor transamidase.